We begin with the raw amino-acid sequence, 247 residues long: 3-deoxy-manno-octulosonate cytidylyltransferase (247 aa).

The protein belongs to the KdsB family.

It localises to the cytoplasm. It catalyses the reaction 3-deoxy-alpha-D-manno-oct-2-ulosonate + CTP = CMP-3-deoxy-beta-D-manno-octulosonate + diphosphate. Its pathway is nucleotide-sugar biosynthesis; CMP-3-deoxy-D-manno-octulosonate biosynthesis; CMP-3-deoxy-D-manno-octulosonate from 3-deoxy-D-manno-octulosonate and CTP: step 1/1. It participates in bacterial outer membrane biogenesis; lipopolysaccharide biosynthesis. In terms of biological role, activates KDO (a required 8-carbon sugar) for incorporation into bacterial lipopolysaccharide in Gram-negative bacteria. This Methylobacterium sp. (strain 4-46) protein is 3-deoxy-manno-octulosonate cytidylyltransferase.